A 600-amino-acid polypeptide reads, in one-letter code: MVNNMTDLTAQEPAWQTRDHLDDPVIGELRNRFGPDAFTVQATRTGVPVVWIKREQLLEVGDFLKKLPKPYVMLFDLHGMDERLRTHREGLPAADFSVFYHLISIDRNRDIMLKVALAENDLHVPTFTKLFPNANWYERETWDLFGITFDGHPNLRRIMMPQTWKGHPLRKDYPARATEFSPFELTKAKQDLEMEALTFKPEEWGMKRGTENEDFMFLNLGPNHPSAHGAFRIVLQLDGEEIVDCVPDIGYHHRGAEKMGERQSWHSYIPYTDRIEYLGGCVNEMPYVLAVEKLAGITVPARVNVIRVMLSELFRINSHLLYISTFIQDVGAMTPVFFAFTDRQKIYDLVEAITGFRMHPAWFRIGGVAHDLPRGWDRLLREFLDWMPKRLASYEKAALQNTILKGRSQGVAAYGAKEALEWGTTGAGLRATGIDFDVRKARPYSGYENFDFEIPVGGGVSDCYTRVMLKVEELRQSLRILEQCLNNMPEGPFKADHPLTTPPPKERTLQHIETLITHFLQVSWGPVMPANESFQMIEATKGINSYYLTSDGSTMSYRTRIRTPSYAHLQQIPAAIRGSLVSDLIVYLGSIDFVMSDVDR.

The tract at residues 1-190 (MVNNMTDLTA…SPFELTKAKQ (190 aa)) is NADH dehydrogenase I subunit C. The tract at residues 214 to 600 (DFMFLNLGPN…IDFVMSDVDR (387 aa)) is NADH dehydrogenase I subunit D.

It in the N-terminal section; belongs to the complex I 30 kDa subunit family. In the C-terminal section; belongs to the complex I 49 kDa subunit family. As to quaternary structure, NDH-1 is composed of 13 different subunits. Subunits NuoB, CD, E, F, and G constitute the peripheral sector of the complex.

The protein localises to the cell inner membrane. The catalysed reaction is a quinone + NADH + 5 H(+)(in) = a quinol + NAD(+) + 4 H(+)(out). Its function is as follows. NDH-1 shuttles electrons from NADH, via FMN and iron-sulfur (Fe-S) centers, to quinones in the respiratory chain. The immediate electron acceptor for the enzyme in this species is believed to be ubiquinone. Couples the redox reaction to proton translocation (for every two electrons transferred, four hydrogen ions are translocated across the cytoplasmic membrane), and thus conserves the redox energy in a proton gradient. The sequence is that of NADH-quinone oxidoreductase subunit C/D from Escherichia coli O157:H7.